We begin with the raw amino-acid sequence, 337 residues long: Cytoskeleton protein RodZ (337 aa).

Residues 1–111 lie on the Cytoplasmic side of the membrane; that stretch reads MNTEATHDQN…LGKRRKKRDG (111 aa). Residues 19 to 71 enclose the HTH cro/C1-type domain; the sequence is LRNAREQLGLSQQAVAERLCLKVSTVRDIEEDKAPADLASTFLRGYIRSYARL. A DNA-binding region (H-T-H motif) is located at residues 30–49; that stretch reads QQAVAERLCLKVSTVRDIEE. A helical; Signal-anchor for type II membrane protein membrane pass occupies residues 112-132; that stretch reads WLMTFTWLVLFVVVGLTGAWW. Residues 133–337 lie on the Periplasmic side of the membrane; that stretch reads WQNHKAQQEE…TLNAEQSPAQ (205 aa). The tract at residues 155-220 is disordered; that stretch reads NAGGDSAQSV…QNAVVAPSQA (66 aa). The segment covering 160–192 has biased composition (polar residues); sequence SAQSVPLDTSEAASQDSTPAPTAPVDSTATNAV. Low complexity predominate over residues 193–217; the sequence is PQTPDASATTTAPAADAQQNAVVAP.

This sequence belongs to the RodZ family.

The protein resides in the cell inner membrane. Its function is as follows. Cytoskeletal protein that is involved in cell-shape control through regulation of the length of the long axis. The sequence is that of Cytoskeleton protein RodZ from Citrobacter koseri (strain ATCC BAA-895 / CDC 4225-83 / SGSC4696).